The following is a 511-amino-acid chain: Kinesin-like protein 8 (511 aa).

Positions 5-356 (NVRVIVRVRP…LRYSEAARRI (352 aa)) constitute a Kinesin motor domain. 107–114 (GQKGTGKT) provides a ligand contact to ATP. A phosphoserine mark is found at S278, S279, S284, and S456. Positions 373 to 489 (EGELDDILTT…KLVKSQLHDY (117 aa)) form a coiled coil.

It belongs to the TRAFAC class myosin-kinesin ATPase superfamily. Kinesin family.

The protein localises to the cytoplasm. It is found in the cytoskeleton. In Schizosaccharomyces pombe (strain 972 / ATCC 24843) (Fission yeast), this protein is Kinesin-like protein 8 (klp8).